The following is a 269-amino-acid chain: Putative hydro-lyase RL2444 (269 aa).

This sequence belongs to the D-glutamate cyclase family.

The polypeptide is Putative hydro-lyase RL2444 (Rhizobium johnstonii (strain DSM 114642 / LMG 32736 / 3841) (Rhizobium leguminosarum bv. viciae)).